The following is a 374-amino-acid chain: Phenoloxidase-activating enzyme 1 (374 aa).

The first 19 residues, 1–19, serve as a signal peptide directing secretion; it reads MWKSLVFFVSALIWSFGSS. Positions 20 to 120 are cleaved as a propeptide — activation peptide; that stretch reads QDCTTPTGSR…QCGIDTTGDR (101 aa). A Clip domain is found at 21 to 74; the sequence is DCTTPTGSRSNCVSLYQCQPLYNAFEQRPLPTHVVSYLGRSQCGFEGYVPRVCC. Intrachain disulfides connect Cys-22/Cys-73, Cys-32/Cys-63, and Cys-38/Cys-74. The span at 83–97 shows a compositional bias: polar residues; sequence ATSARPTQAPTQGSS. The disordered stretch occupies residues 83-114; the sequence is ATSARPTQAPTQGSSDVFPEDSSPAPRNQCGI. The region spanning 121–370 is the Peptidase S1 domain; it reads VYGGTITDLD…YIDWIQNTIA (250 aa). A disulfide bridge links Cys-151 with Cys-167. Residue His-166 is the Charge relay system of the active site. The Ca(2+) site is built by Glu-186 and Asp-194. The Charge relay system role is filled by Asp-228. Disulfide bonds link Cys-292–Cys-307 and Cys-317–Cys-346. Ser-321 serves as the catalytic Charge relay system.

The protein belongs to the peptidase S1 family. CLIP subfamily. In terms of processing, activated by the removal of the N-terminal inhibitory propeptide. Expressed in hemocytes.

It is found in the secreted. With respect to regulation, inhibited by aprotenin. Not inhibited by EDTA, PMSF or leupeptin. Its function is as follows. Serine protease which, by cleaving and activating prophenoloxidase (PPO1) after immune challenge, plays an essential role in the melanization immune response to wounding. The sequence is that of Phenoloxidase-activating enzyme 1 from Spodoptera litura (Asian cotton leafworm).